Consider the following 799-residue polypeptide: Protein scabrous (799 aa).

The N-terminal stretch at 1 to 51 (MRDWQTFPDLQKKKVSRDHLNCPATMAGSNVLWPILLAVVLLQISVAFVSG) is a signal peptide. Positions 287 to 316 (TRKDGSSASVEEESGSQEANQEQTGLETTA) are disordered. Asparagine 372 is a glycosylation site (N-linked (GlcNAc...) asparagine). Residues 489–498 (LNKPHKRPHH) are compositionally biased toward basic residues. A disordered region spans residues 489–509 (LNKPHKRPHHQNVQAQMPQDD). The region spanning 533–737 (AIINKLPHDC…SSRMLVKRLP (205 aa)) is the Fibrinogen C-terminal domain. Cysteine 542 and cysteine 568 are oxidised to a cystine. Residues asparagine 587, asparagine 618, and asparagine 660 are each glycosylated (N-linked (GlcNAc...) asparagine). Cysteine 687 and cysteine 700 form a disulfide bridge. 2 N-linked (GlcNAc...) asparagine glycosylation sites follow: asparagine 744 and asparagine 787.

In terms of processing, possesses five pairs of dibasic residues that may be the target of proteolytic processing.

The protein localises to the late endosome. Involved in regulation of neurogenesis. May encode a lateral inhibitor of R8 differentiation. In conjunction with Gp150, promotes Notch activation in response to Delta by regulating acquisition of insensitivity to Delta in a subset of cells. The polypeptide is Protein scabrous (sca) (Drosophila melanogaster (Fruit fly)).